The sequence spans 286 residues: Formamidopyrimidine-DNA glycosylase (286 aa).

Residue Pro-2 is the Schiff-base intermediate with DNA of the active site. The active-site Proton donor is Glu-3. Lys-61 serves as the catalytic Proton donor; for beta-elimination activity. 3 residues coordinate DNA: His-103, Arg-122, and Arg-164. The segment at 250 to 284 (NAYGQTGEPCGRCGTQIVRENFMNRGSHYCPNCQK) adopts an FPG-type zinc-finger fold. The Proton donor; for delta-elimination activity role is filled by Arg-274.

Belongs to the FPG family. Monomer. It depends on Zn(2+) as a cofactor.

The catalysed reaction is Hydrolysis of DNA containing ring-opened 7-methylguanine residues, releasing 2,6-diamino-4-hydroxy-5-(N-methyl)formamidopyrimidine.. It catalyses the reaction 2'-deoxyribonucleotide-(2'-deoxyribose 5'-phosphate)-2'-deoxyribonucleotide-DNA = a 3'-end 2'-deoxyribonucleotide-(2,3-dehydro-2,3-deoxyribose 5'-phosphate)-DNA + a 5'-end 5'-phospho-2'-deoxyribonucleoside-DNA + H(+). Its function is as follows. Involved in base excision repair of DNA damaged by oxidation or by mutagenic agents. Acts as a DNA glycosylase that recognizes and removes damaged bases. Has a preference for oxidized purines, such as 7,8-dihydro-8-oxoguanine (8-oxoG). Has AP (apurinic/apyrimidinic) lyase activity and introduces nicks in the DNA strand. Cleaves the DNA backbone by beta-delta elimination to generate a single-strand break at the site of the removed base with both 3'- and 5'-phosphates. The polypeptide is Formamidopyrimidine-DNA glycosylase (Corynebacterium glutamicum (strain R)).